Here is a 149-residue protein sequence, read N- to C-terminus: Transcriptional repressor NrdR (149 aa).

A zinc finger lies at 3 to 34; it reads CPFCGNRDTNVRDSRSVNEGTFIKRRRFCGEC. In terms of domain architecture, ATP-cone spans 49–139; it reads IKVIKKNGSC…VYMNFENEKD (91 aa).

It belongs to the NrdR family. Requires Zn(2+) as cofactor.

Functionally, negatively regulates transcription of bacterial ribonucleotide reductase nrd genes and operons by binding to NrdR-boxes. This Neorickettsia sennetsu (strain ATCC VR-367 / Miyayama) (Ehrlichia sennetsu) protein is Transcriptional repressor NrdR.